Consider the following 146-residue polypeptide: Lysozyme C (146 aa).

An N-terminal signal peptide occupies residues 1 to 16; it reads SGKYISWEDSCSYLQL. The 130-residue stretch at 17–146 folds into the C-type lysozyme domain; that stretch reads QKYERCELAK…LSQWTQGCKL (130 aa). 4 disulfide bridges follow: cysteine 22-cysteine 144, cysteine 46-cysteine 132, cysteine 81-cysteine 97, and cysteine 93-cysteine 111. Catalysis depends on residues glutamate 51 and aspartate 69.

The protein belongs to the glycosyl hydrolase 22 family. Expressed by the skin glands.

It localises to the secreted. It catalyses the reaction Hydrolysis of (1-&gt;4)-beta-linkages between N-acetylmuramic acid and N-acetyl-D-glucosamine residues in a peptidoglycan and between N-acetyl-D-glucosamine residues in chitodextrins.. In terms of biological role, lysozymes have primarily a bacteriolytic function; those in tissues and body fluids are associated with the monocyte-macrophage system and enhance the activity of immunoagents. Has antibacterial activity against the Gram-positive bacterium S.aureus and against the Gram-negative bacterium E.coli with a MIC of 1 uM and 8 uM respectively. No antifungal activity against C.albicans. In Bufo gargarizans andrewsi (Andrew's toad), this protein is Lysozyme C.